Consider the following 369-residue polypeptide: Phosphoribosyl pyrophosphate synthase-associated protein 2 (369 aa).

M1 carries the N-acetylmethionine modification. The residue at position 5 (T5) is a Phosphothreonine. Phosphoserine is present on residues S219, S227, and S233.

It belongs to the ribose-phosphate pyrophosphokinase family. As to quaternary structure, binds to PRPS1 and PRPS2.

Seems to play a negative regulatory role in 5-phosphoribose 1-diphosphate synthesis. This Pongo abelii (Sumatran orangutan) protein is Phosphoribosyl pyrophosphate synthase-associated protein 2 (PRPSAP2).